Reading from the N-terminus, the 474-residue chain is Nitrogenase vanadium-iron protein alpha chain (474 aa).

Cysteine 49, cysteine 75, and cysteine 138 together coordinate [8Fe-7S] cluster. Residues cysteine 257 and histidine 423 each coordinate [7Fe-V-9S-C-homocitryl] cluster.

It belongs to the NifD/NifK/NifE/NifN family. As to quaternary structure, hexamer of two alpha, two beta, and two delta chains. [8Fe-7S] cluster is required as a cofactor. The cofactor is [7Fe-V-9S-C-homocitryl] cluster.

The enzyme catalyses N2 + 8 reduced [2Fe-2S]-[ferredoxin] + 16 ATP + 16 H2O = H2 + 8 oxidized [2Fe-2S]-[ferredoxin] + 2 NH4(+) + 16 ADP + 16 phosphate + 6 H(+). Functionally, this vanadium-iron protein is part of the nitrogenase complex that catalyzes the key enzymatic reactions in nitrogen fixation. This chain is Nitrogenase vanadium-iron protein alpha chain (vnfD), found in Azotobacter vinelandii.